A 291-amino-acid chain; its full sequence is 3-hydroxy-5-phosphonooxypentane-2,4-dione thiolase (291 aa).

Catalysis depends on Lys-203, which acts as the Schiff-base intermediate with substrate.

Belongs to the DeoC/FbaB aldolase family. Homodecamer.

The protein localises to the cytoplasm. It catalyses the reaction dihydroxyacetone phosphate + acetyl-CoA = 3-hydroxy-2,4-dioxopentyl phosphate + CoA. Involved in the degradation of phospho-AI-2, thereby terminating induction of the lsr operon and closing the AI-2 signaling cycle. Catalyzes the transfer of an acetyl moiety from 3-hydroxy-5-phosphonooxypentane-2,4-dione to CoA to form glycerone phosphate and acetyl-CoA. The chain is 3-hydroxy-5-phosphonooxypentane-2,4-dione thiolase from Salmonella paratyphi A (strain ATCC 9150 / SARB42).